The following is a 126-amino-acid chain: Ribonuclease P protein component (126 aa).

It belongs to the RnpA family. In terms of assembly, consists of a catalytic RNA component (M1 or rnpB) and a protein subunit.

It carries out the reaction Endonucleolytic cleavage of RNA, removing 5'-extranucleotides from tRNA precursor.. In terms of biological role, RNaseP catalyzes the removal of the 5'-leader sequence from pre-tRNA to produce the mature 5'-terminus. It can also cleave other RNA substrates such as 4.5S RNA. The protein component plays an auxiliary but essential role in vivo by binding to the 5'-leader sequence and broadening the substrate specificity of the ribozyme. The protein is Ribonuclease P protein component of Synechococcus sp. (strain JA-3-3Ab) (Cyanobacteria bacterium Yellowstone A-Prime).